A 555-amino-acid chain; its full sequence is Disabled homolog 1 (555 aa).

Residues 1-26 (MSTETELQVAVKTSAKKDSRKKGQDR) form a disordered region. The span at 15–26 (AKKDSRKKGQDR) shows a compositional bias: basic and acidic residues. The region spanning 36–189 (KGEGVRYKAK…CEQAVYQTIL (154 aa)) is the PID domain. A phosphotyrosine mark is found at Tyr198, Tyr220, and Tyr232. Disordered stretches follow at residues 384-410 (LTPL…RQKM), 418-437 (FQMA…PSLT), and 468-555 (NLTP…QAGS). Residues 391–403 (PGTSDSTRPSPQT) show a composition bias toward polar residues. 2 stretches are compositionally biased toward low complexity: residues 470 to 479 (TPVTSTTPST) and 487 to 501 (PRQS…SHAS). Residue Ser491 is modified to Phosphoserine; by CDK5. Positions 504-513 (TTDDIFEEGF) are enriched in acidic residues.

As to quaternary structure, associates with the SH2 domains of SRC, FYN and ABL. Interacts (phosphorylated on tyrosine residues) with CRK and CRKL (via respective SH2 domain). Interacts with DAB2IP, SIAH1, LRP8 and VLDLR. Interacts with LRP1. Interacts with APLP1 (via NPXY motif). Interacts with DAB2IP. Interacts with ZSWIM8. In terms of processing, phosphorylated by FYN on Tyr-198 and Tyr-220 upon reelin induction in embryonic neurons. Also phosphorylated on Ser-491 independently of reelin signaling. Ubiquitinated by various cullin-5-RING E3 ubiquitin-protein ligase complexes (ECS complexes) following ligand-binding and phosphorylation, leading to its degradation. Ubiquitinated by the ECS(SOCS7) complex in the cortical plate of the developing cerebral cortex following ligand-binding and phosphorylation by FYN, leading to its degradation by the proteasome. Recognized by ZSWIM8 through a disorder targets misorder mechanism that eliminates misfolded DAB1 via ubiquitination and proteasomal degradation.

It localises to the cytoplasm. Signaling adapter of the reelin-mediated signaling pathway, which regulates the migration and differentiation of postmitotic neurons during brain development. Mediates intracellular transduction of Reelin signaling following reelin (RELN)-binding to its receptor: acts by docking proteins through its phosphotyrosine residues and PID domain. This chain is Disabled homolog 1 (DAB1), found in Macaca fascicularis (Crab-eating macaque).